The primary structure comprises 630 residues: Putative polypeptide N-acetylgalactosaminyltransferase 10 (630 aa).

At 1 to 6 the chain is on the cytoplasmic side; the sequence is MNVDLR. Residues 7-26 form a helical; Signal-anchor for type II membrane protein membrane-spanning segment; that stretch reads LIVRLLLAILLTSLVTTILM. Residues 27–630 lie on the Lumenal side of the membrane; it reads GKQIHRRLVK…APYDPQREPH (604 aa). N-linked (GlcNAc...) asparagine glycans are attached at residues asparagine 72, asparagine 84, asparagine 146, and asparagine 168. 3 cysteine pairs are disulfide-bonded: cysteine 157–cysteine 386, cysteine 377–cysteine 456, and cysteine 496–cysteine 513. The tract at residues 166 to 277 is catalytic subdomain A; it reads LPNVTVIIAF…TNWLPPLLEP (112 aa). Substrate is bound by residues aspartate 207 and arginine 238. Aspartate 261 provides a ligand contact to Mn(2+). Residue serine 262 coordinates substrate. Histidine 263 is a Mn(2+) binding site. The tract at residues 333–394 is catalytic subdomain B; that stretch reads PYRTPVLSGA…PCARVGHIGK (62 aa). Residue tryptophan 363 participates in substrate binding. Histidine 391 serves as a coordination point for Mn(2+). Positions 483-618 constitute a Ricin B-type lectin domain; the sequence is FSGVIESVAF…NQLEQQWKVG (136 aa). An N-linked (GlcNAc...) asparagine glycan is attached at asparagine 525. 2 disulfide bridges follow: cysteine 543/cysteine 559 and cysteine 586/cysteine 606.

This sequence belongs to the glycosyltransferase 2 family. GalNAc-T subfamily. It depends on Mn(2+) as a cofactor. During embryonic stages 9-11, weakly expressed in the mesoderm. During embryonic stages 12-13, very weak expression is observed in the somatic mesoderm region. No expression detected from stage 14-15. During embryonic stages 16-17, expressed in the epidermis and the antennomaxillary complex. In third instar larvae, expressed ubiquitously in wing, eye-antennal, leg and haltere imaginal disks.

It is found in the golgi apparatus membrane. It catalyses the reaction L-seryl-[protein] + UDP-N-acetyl-alpha-D-galactosamine = a 3-O-[N-acetyl-alpha-D-galactosaminyl]-L-seryl-[protein] + UDP + H(+). The enzyme catalyses L-threonyl-[protein] + UDP-N-acetyl-alpha-D-galactosamine = a 3-O-[N-acetyl-alpha-D-galactosaminyl]-L-threonyl-[protein] + UDP + H(+). It functions in the pathway protein modification; protein glycosylation. Functionally, may catalyze the initial reaction in O-linked oligosaccharide biosynthesis, the transfer of an N-acetyl-D-galactosamine residue to a serine or threonine residue on the protein receptor. In Drosophila melanogaster (Fruit fly), this protein is Putative polypeptide N-acetylgalactosaminyltransferase 10 (pgant10).